The following is a 352-amino-acid chain: C-C chemokine receptor type 5 (352 aa).

Residues 1–30 (MDYQVSSPTYDIDYYTSEPCQKVNVKQIAA) are Extracellular-facing. Tyr-3 carries the sulfotyrosine modification. 2 O-linked (GalNAc...) serine glycosylation sites follow: Ser-6 and Ser-7. Tyr-10, Tyr-14, and Tyr-15 each carry sulfotyrosine. 2 cysteine pairs are disulfide-bonded: Cys-20–Cys-269 and Cys-101–Cys-178. Residues 31–58 (RLLPPLYSLVFIFGFVGNILVVLILINC) form a helical membrane-spanning segment. At 59 to 68 (KRLKSMTDIY) the chain is on the cytoplasmic side. The chain crosses the membrane as a helical span at residues 69 to 89 (LLNLAISDLFFLLTVPFWAHY). The Extracellular portion of the chain corresponds to 90–102 (AAAQWDFGNTMCQ). A helical membrane pass occupies residues 103 to 124 (LLTGLYFIGFFSGIFFIILLTI). Residues 125–141 (DRYLAIVHAVFALKART) lie on the Cytoplasmic side of the membrane. A helical membrane pass occupies residues 142–166 (VTFGVVTSVITWVVAVFASLPGIIF). The Extracellular segment spans residues 167–198 (TRSQREGLHYTCSSHFPYSQYQFWKNFQTLKI). The helical transmembrane segment at 199-218 (VILGLVLPLLVMVICYSGIL) threads the bilayer. The Cytoplasmic segment spans residues 219–235 (KTLLRCRSEKKRHRAVR). A helical membrane pass occupies residues 236 to 260 (LIFTIMIVYFLFWAPYNIVLLLNTF). Over 261-277 (QEFFGLNNCSSSNRLDQ) the chain is Extracellular. A helical transmembrane segment spans residues 278 to 301 (AMQVTETLGMTHCCINPIIYAFVG). At 302 to 352 (EKFRNYLLVFFQKHIAKHFCKCCSIFQQEAPERASSVYTRSTGEQEISVGL) the chain is on the cytoplasmic side. 3 S-palmitoyl cysteine lipidation sites follow: Cys-321, Cys-323, and Cys-324. Residues Ser-336, Ser-337, Ser-342, and Ser-349 each carry the phosphoserine; by BARK1 modification.

It belongs to the G-protein coupled receptor 1 family. As to quaternary structure, interacts with PRAF2. Efficient ligand binding to CCL3/MIP-1alpha and CCL4/MIP-1beta requires sulfation, O-glycosylation and sialic acid modifications. Glycosylation on Ser-6 is required for efficient binding of CCL4. Interacts with GRK2. Interacts with ARRB1 and ARRB2. Interacts with CNIH4. Interacts with S100A4; this interaction stimulates T-lymphocyte chemotaxis. Post-translationally, sulfated on at least 2 of the N-terminal tyrosines. Sulfation is required for efficient binding of the chemokines, CCL3 and CCL4. In terms of processing, palmitoylation in the C-terminal is important for cell surface expression. Phosphorylation on serine residues in the C-terminal is stimulated by binding CC chemokines especially by APO-RANTES. Post-translationally, O-glycosylated, but not N-glycosylated. Ser-6 appears to be the major site even if Ser-7 may be also O-glycosylated. Also sialylated glycans present which contribute to chemokine binding. Thr-16 and Ser-17 may also be glycosylated and, if so, with small moieties such as a T-antigen.

Its subcellular location is the cell membrane. Receptor for a number of inflammatory CC-chemokines including CCL3/MIP-1-alpha, CCL4/MIP-1-beta and RANTES and subsequently transduces a signal by increasing the intracellular calcium ion level. May play a role in the control of granulocytic lineage proliferation or differentiation. Participates in T-lymphocyte migration to the infection site by acting as a chemotactic receptor. The polypeptide is C-C chemokine receptor type 5 (CCR5) (Trachypithecus johnii (Nilgiri langur)).